The following is a 655-amino-acid chain: Carboxypeptidase S1 homolog B (655 aa).

The signal sequence occupies residues 1–21 (MRPFARAALCLLAAAGHLAQA). A disulfide bridge connects residues Cys51 and Cys123. 3 N-linked (GlcNAc...) asparagine glycosylation sites follow: Asn130, Asn163, and Asn186. The active site involves Ser240. Residues Asn266, Asn302, and Asn311 are each glycosylated (N-linked (GlcNAc...) asparagine). 2 disulfides stabilise this stretch: Cys328–Cys364 and Cys335–Cys357. An N-linked (GlcNAc...) asparagine glycan is attached at Asn414. Asp459 is an active-site residue. Cys462 contacts substrate. Asn475, Asn493, and Asn506 each carry an N-linked (GlcNAc...) asparagine glycan. Residue His517 is part of the active site. Residue Glu518 coordinates substrate. N-linked (GlcNAc...) asparagine glycosylation is found at Asn598 and Asn612. Residue Gly631 is the site of GPI-anchor amidated glycine attachment. The propeptide at 632–655 (AALVSGRIKFHVHVIKSFDYYIFI) is removed in mature form.

Belongs to the peptidase S10 family.

It is found in the cell membrane. The enzyme catalyses Preferential release of a C-terminal arginine or lysine residue.. Extracellular serine carboxypeptidase that contributes to pathogenicity. The sequence is that of Carboxypeptidase S1 homolog B (SCPB) from Arthroderma otae (strain ATCC MYA-4605 / CBS 113480) (Microsporum canis).